The sequence spans 38 residues: Large ribosomal subunit protein bL36 (38 aa).

The protein belongs to the bacterial ribosomal protein bL36 family.

The sequence is that of Large ribosomal subunit protein bL36 from Cellvibrio japonicus (strain Ueda107) (Pseudomonas fluorescens subsp. cellulosa).